Here is a 192-residue protein sequence, read N- to C-terminus: Peptidyl-tRNA hydrolase (192 aa).

Position 17 (H17) interacts with tRNA. H22 acts as the Proton acceptor in catalysis. Positions 68, 70, and 116 each coordinate tRNA.

This sequence belongs to the PTH family. In terms of assembly, monomer.

It is found in the cytoplasm. It carries out the reaction an N-acyl-L-alpha-aminoacyl-tRNA + H2O = an N-acyl-L-amino acid + a tRNA + H(+). Functionally, hydrolyzes ribosome-free peptidyl-tRNAs (with 1 or more amino acids incorporated), which drop off the ribosome during protein synthesis, or as a result of ribosome stalling. Catalyzes the release of premature peptidyl moieties from peptidyl-tRNA molecules trapped in stalled 50S ribosomal subunits, and thus maintains levels of free tRNAs and 50S ribosomes. This Stenotrophomonas maltophilia (strain R551-3) protein is Peptidyl-tRNA hydrolase.